A 306-amino-acid polypeptide reads, in one-letter code: Homeobox protein HMX3 (306 aa).

Positions 95–181 are disordered; that stretch reads HTPRTEVPDK…DKKPCRKKKT (87 aa). Basic and acidic residues-rich tracts occupy residues 117-143 and 153-174; these read GERD…KSPE and EEGK…PDKK. The segment at residues 178-237 is a DNA-binding region (homeobox); sequence KKKTRTVFSRSQVFQLESTFDMKRYLSSSERAGLAASLHLTETQVKIWFQNRRNKWKRQL.

Belongs to the HMX homeobox family.

It is found in the nucleus. Functionally, transcription factor involved in specification of neuronal cell types and which is required for inner ear and hypothalamus development. Binds to the 5'-CAAGTG-3' core sequence. May act as a stage-specific inhibitor of anf1 in the anterior neural plate during the development. The sequence is that of Homeobox protein HMX3 (hmx3) from Xenopus tropicalis (Western clawed frog).